Here is a 134-residue protein sequence, read N- to C-terminus: MIIGIGSDLIDIRRVEKSIERFGERFTHRCFTEIERARSDRRANRAESYAKRFAAKEACSKALGTGLAQGVFWKDMGVVNLPSGKPTMVLSGGAAVILESMLPAGHRAAIHLTITDDYPLAQAFVIIEALPESL.

The Mg(2+) site is built by Asp-8 and Glu-57.

This sequence belongs to the P-Pant transferase superfamily. AcpS family. It depends on Mg(2+) as a cofactor.

Its subcellular location is the cytoplasm. It catalyses the reaction apo-[ACP] + CoA = holo-[ACP] + adenosine 3',5'-bisphosphate + H(+). In terms of biological role, transfers the 4'-phosphopantetheine moiety from coenzyme A to a Ser of acyl-carrier-protein. The protein is Holo-[acyl-carrier-protein] synthase of Rhizobium etli (strain CIAT 652).